The primary structure comprises 128 residues: Anti-sigma-F factor antagonist RsfA (128 aa).

In terms of domain architecture, STAS spans 17–128; the sequence is LKATIQHHDS…PTTESALSAT (112 aa). A disulfide bridge links C73 with C109.

Belongs to the anti-sigma-factor antagonist family. As to quaternary structure, monomer. Interacts with anti-sigma-F factor RsbW (UsfX).

Functionally, positive, redox-sensitive regulator of sigma-F (SigF) activity. When reduced binds to anti-sigma-F factor RsbW (UsfX) preventing its binding to SigF, thus activating transcription. This is Anti-sigma-F factor antagonist RsfA (rsfA) from Mycobacterium tuberculosis (strain CDC 1551 / Oshkosh).